The chain runs to 538 residues: Chaperonin GroEL 1 (538 aa).

ATP contacts are provided by residues 29 to 32 (TLGP), 86 to 90 (DGTTT), Gly-413, 478 to 480 (NAA), and Asp-494.

Belongs to the chaperonin (HSP60) family. As to quaternary structure, forms a cylinder of 14 subunits composed of two heptameric rings stacked back-to-back. Interacts with the co-chaperonin GroES.

It localises to the cytoplasm. The catalysed reaction is ATP + H2O + a folded polypeptide = ADP + phosphate + an unfolded polypeptide.. Together with its co-chaperonin GroES, plays an essential role in assisting protein folding. The GroEL-GroES system forms a nano-cage that allows encapsulation of the non-native substrate proteins and provides a physical environment optimized to promote and accelerate protein folding. The sequence is that of Chaperonin GroEL 1 from Corynebacterium glutamicum (strain R).